Here is a 138-residue protein sequence, read N- to C-terminus: Phospholipase A2 homolog (138 aa).

Positions 1–16 are cleaved as a signal peptide; that stretch reads MRALWIVAVWLIGVEG. 7 disulfides stabilise this stretch: Cys-42–Cys-131, Cys-44–Cys-60, Cys-59–Cys-111, Cys-65–Cys-138, Cys-66–Cys-104, Cys-73–Cys-97, and Cys-91–Cys-102. Positions 121-133 are important for membrane-damaging activities in eukaryotes and bacteria; heparin-binding; that stretch reads KKYTYYPNFLCKG.

It belongs to the phospholipase A2 family. Group II subfamily. S49 sub-subfamily. Monomer. Expressed by the venom gland.

It localises to the secreted. In terms of biological role, snake venom phospholipase A2 homolog that lacks enzymatic activity. Shows high myotoxin activities and displays edema-inducing activities. Has cytotoxic activities against HUVEC cells (LC(50)=5.0 uL) and human lung adenocarcinoma A549 cells (LC(50)=5.2 uL). The chain is Phospholipase A2 homolog from Echis ocellatus (Ocellated saw-scaled viper).